Reading from the N-terminus, the 1181-residue chain is DNA-directed RNA polymerase subunit beta' (1181 aa).

The Zn(2+) site is built by Cys-68, Cys-70, Cys-83, and Cys-86. Mg(2+) is bound by residues Asp-457, Asp-459, and Asp-461. Residues Cys-802, Cys-876, Cys-883, and Cys-886 each coordinate Zn(2+).

This sequence belongs to the RNA polymerase beta' chain family. As to quaternary structure, the RNAP catalytic core consists of 2 alpha, 1 beta, 1 beta' and 1 omega subunit. When a sigma factor is associated with the core the holoenzyme is formed, which can initiate transcription. Mg(2+) is required as a cofactor. It depends on Zn(2+) as a cofactor.

The enzyme catalyses RNA(n) + a ribonucleoside 5'-triphosphate = RNA(n+1) + diphosphate. Functionally, DNA-dependent RNA polymerase catalyzes the transcription of DNA into RNA using the four ribonucleoside triphosphates as substrates. This is DNA-directed RNA polymerase subunit beta' from Syntrophomonas wolfei subsp. wolfei (strain DSM 2245B / Goettingen).